The following is a 213-amino-acid chain: Phosphoribosyl-dephospho-CoA transferase (213 aa).

Residues Asp135 and Asp137 contribute to the active site.

Belongs to the MdcG family.

The catalysed reaction is apo-[malonate decarboxylase ACP] + 2'-(5''-triphospho-alpha-D-ribosyl)-3'-dephospho-CoA = holo-[malonate decarboxylase ACP] + diphosphate. Transfers 2'-(5-triphosphoribosyl)-3'-dephosphocoenzyme-A to the apo-[acyl-carrier-protein] of the malonate decarboxylase to yield holo-[acyl-carrier-protein]. This is Phosphoribosyl-dephospho-CoA transferase from Xanthomonas campestris pv. campestris (strain ATCC 33913 / DSM 3586 / NCPPB 528 / LMG 568 / P 25).